The chain runs to 339 residues: Probable cytosolic iron-sulfur protein assembly protein CIAO1 (339 aa).

WD repeat units follow at residues 14 to 53 (HPDS…WICK), 59 to 98 (GHQR…FECV), 103 to 142 (GHEN…EYEC), 148 to 187 (SHTQ…WVCC), 192 to 231 (GHES…NEQG), 250 to 289 (FHTR…DPQQ), and 301 to 339 (AHSQ…PAGL). Positions 176-178 (LYQ) match the LYR motif; required for interaction with HSC20 motif.

This sequence belongs to the WD repeat CIA1 family. In terms of assembly, component of the CIA complex. Interacts with CIAO2A and forms a complex with CIAO2B and MMS19; the interactions with CIAO2A and CIAO2B are mutually exclusive. Interacts with CHD1L, ERCC2, IREB2 and POLD1. Component of the MMXD complex, which includes CIAO1, ERCC2, CIAO2B, MMS19 and SLC25A5. Interacts with WT1. Interacts with CIAO3. Interacts (via LYR motif) with HSC20.

It is found in the cytoplasm. Its function is as follows. Key component of the cytosolic iron-sulfur protein assembly (CIA) complex, a multiprotein complex that mediates the incorporation of iron-sulfur cluster into extramitochondrial Fe/S proteins. As a CIA complex component, interacts specifically with CIAO2A or CIAO2B and MMS19 to assist different branches of iron-sulfur protein assembly, depending of its interactors. The complex CIAO1:CIAO2B:MMS19 binds to and facilitates the assembly of most cytosolic-nuclear Fe/S proteins. CIAO1:CIAO2A specifically matures ACO1 and stabilizes IREB2. Seems to specifically modulate the transactivation activity of WT1. As part of the mitotic spindle-associated MMXD complex it may play a role in chromosome segregation. This is Probable cytosolic iron-sulfur protein assembly protein CIAO1 from Rattus norvegicus (Rat).